The sequence spans 303 residues: tRNA dimethylallyltransferase (303 aa).

10 to 17 (GPTASGKS) lines the ATP pocket. Position 12–17 (12–17 (TASGKS)) interacts with substrate. Residues 35 to 38 (DSMQ) are interaction with substrate tRNA.

It belongs to the IPP transferase family. In terms of assembly, monomer. The cofactor is Mg(2+).

It catalyses the reaction adenosine(37) in tRNA + dimethylallyl diphosphate = N(6)-dimethylallyladenosine(37) in tRNA + diphosphate. Functionally, catalyzes the transfer of a dimethylallyl group onto the adenine at position 37 in tRNAs that read codons beginning with uridine, leading to the formation of N6-(dimethylallyl)adenosine (i(6)A). The protein is tRNA dimethylallyltransferase of Methylobacterium nodulans (strain LMG 21967 / CNCM I-2342 / ORS 2060).